A 579-amino-acid chain; its full sequence is Glutamate--tRNA ligase (579 aa).

The 'HIGH' region signature appears at 114–124 (PNPNGPWHIGH).

The protein belongs to the class-I aminoacyl-tRNA synthetase family. Glutamate--tRNA ligase type 2 subfamily.

The protein resides in the cytoplasm. It catalyses the reaction tRNA(Glu) + L-glutamate + ATP = L-glutamyl-tRNA(Glu) + AMP + diphosphate. In terms of biological role, catalyzes the attachment of glutamate to tRNA(Glu) in a two-step reaction: glutamate is first activated by ATP to form Glu-AMP and then transferred to the acceptor end of tRNA(Glu). This is Glutamate--tRNA ligase from Haloarcula marismortui (strain ATCC 43049 / DSM 3752 / JCM 8966 / VKM B-1809) (Halobacterium marismortui).